We begin with the raw amino-acid sequence, 288 residues long: 2-methoxy-6-polyprenyl-1,4-benzoquinol methylase, mitochondrial (288 aa).

The N-terminal 27 residues, 1-27 (MALRSVSRRLGSRILNQRSFVASLHSH), are a transit peptide targeting the mitochondrion. S-adenosyl-L-methionine is bound by residues Thr94, Asp130, and 160 to 161 (DA).

The protein belongs to the class I-like SAM-binding methyltransferase superfamily. MenG/UbiE family. As to quaternary structure, component of a multi-subunit COQ enzyme complex.

Its subcellular location is the mitochondrion inner membrane. It catalyses the reaction a 2-methoxy-6-(all-trans-polyprenyl)benzene-1,4-diol + S-adenosyl-L-methionine = a 5-methoxy-2-methyl-3-(all-trans-polyprenyl)benzene-1,4-diol + S-adenosyl-L-homocysteine + H(+). It functions in the pathway cofactor biosynthesis; ubiquinone biosynthesis. In terms of biological role, methyltransferase required for the conversion of 2-polyprenyl-6-methoxy-1,4-benzoquinol (DDMQH2) to 2-polyprenyl-3-methyl-6-methoxy-1,4-benzoquinol (DMQH2). The polypeptide is 2-methoxy-6-polyprenyl-1,4-benzoquinol methylase, mitochondrial (Arabidopsis thaliana (Mouse-ear cress)).